A 354-amino-acid chain; its full sequence is Putrescine/cadaverine-binding protein (354 aa).

The signal sequence occupies residues 1 to 20 (MMKKLLLVATLMAGAAQATA).

This sequence belongs to the bacterial solute-binding protein 1 family.

It localises to the periplasm. Binds putrescine and cadaverine. The polypeptide is Putrescine/cadaverine-binding protein (Pseudomonas aeruginosa (strain ATCC 15692 / DSM 22644 / CIP 104116 / JCM 14847 / LMG 12228 / 1C / PRS 101 / PAO1)).